A 228-amino-acid polypeptide reads, in one-letter code: LOB domain-containing protein 30 (228 aa).

An LOB domain is found at 16 to 118 (GPCGACKFLR…TELSYLQAHL (103 aa)). The disordered stretch occupies residues 188 to 228 (SNMGGGGELQALAREFIHGGQMPAQPSPGTSGSASSVIKRE). The span at 214–228 (SPGTSGSASSVIKRE) shows a compositional bias: polar residues.

Belongs to the LOB domain-containing protein family. Expressed in roots, stems, leaves and flowers. Expressed in vascular tissues of hypocotyls, leaves, roots, developing floral organs and siliques.

Its function is as follows. Involved in the positive regulation of tracheary element (TE) differentiation. Involved in a positive feedback loop that maintains or promotes NAC030/VND7 expression that regulates TE differentiation-related genes. The chain is LOB domain-containing protein 30 (LBD30) from Arabidopsis thaliana (Mouse-ear cress).